The chain runs to 119 residues: Large ribosomal subunit protein bL20 (119 aa).

The protein belongs to the bacterial ribosomal protein bL20 family.

Binds directly to 23S ribosomal RNA and is necessary for the in vitro assembly process of the 50S ribosomal subunit. It is not involved in the protein synthesizing functions of that subunit. This Acinetobacter baylyi (strain ATCC 33305 / BD413 / ADP1) protein is Large ribosomal subunit protein bL20.